The chain runs to 94 residues: Integration host factor subunit beta (94 aa).

It belongs to the bacterial histone-like protein family. As to quaternary structure, heterodimer of an alpha and a beta chain.

Functionally, this protein is one of the two subunits of integration host factor, a specific DNA-binding protein that functions in genetic recombination as well as in transcriptional and translational control. This is Integration host factor subunit beta from Vibrio campbellii (strain ATCC BAA-1116).